A 558-amino-acid polypeptide reads, in one-letter code: Dihydroxy-acid dehydratase (558 aa).

A Mg(2+)-binding site is contributed by D78. C119 is a binding site for [2Fe-2S] cluster. Mg(2+) contacts are provided by D120 and K121. The residue at position 121 (K121) is an N6-carboxylysine. [2Fe-2S] cluster is bound at residue C192. E446 lines the Mg(2+) pocket. The active-site Proton acceptor is S472.

It belongs to the IlvD/Edd family. Homodimer. It depends on [2Fe-2S] cluster as a cofactor. Requires Mg(2+) as cofactor.

The catalysed reaction is (2R)-2,3-dihydroxy-3-methylbutanoate = 3-methyl-2-oxobutanoate + H2O. It catalyses the reaction (2R,3R)-2,3-dihydroxy-3-methylpentanoate = (S)-3-methyl-2-oxopentanoate + H2O. Its pathway is amino-acid biosynthesis; L-isoleucine biosynthesis; L-isoleucine from 2-oxobutanoate: step 3/4. It participates in amino-acid biosynthesis; L-valine biosynthesis; L-valine from pyruvate: step 3/4. Functionally, functions in the biosynthesis of branched-chain amino acids. Catalyzes the dehydration of (2R,3R)-2,3-dihydroxy-3-methylpentanoate (2,3-dihydroxy-3-methylvalerate) into 2-oxo-3-methylpentanoate (2-oxo-3-methylvalerate) and of (2R)-2,3-dihydroxy-3-methylbutanoate (2,3-dihydroxyisovalerate) into 2-oxo-3-methylbutanoate (2-oxoisovalerate), the penultimate precursor to L-isoleucine and L-valine, respectively. The protein is Dihydroxy-acid dehydratase of Campylobacter jejuni subsp. jejuni serotype O:23/36 (strain 81-176).